Consider the following 1059-residue polypeptide: Carbamoyl phosphate synthase large chain (1059 aa).

A carboxyphosphate synthetic domain region spans residues 1 to 401 (MPKRSDIKKI…SLLKACRSLE (401 aa)). The ATP site is built by arginine 129, arginine 169, glycine 175, glycine 176, arginine 208, isoleucine 210, glutamate 215, glycine 241, isoleucine 242, histidine 243, glutamine 284, and glutamate 298. Residues 133 to 327 (KQLMEELEQP…IAKLAAKIAV (195 aa)) form the ATP-grasp 1 domain. Mg(2+)-binding residues include glutamine 284, glutamate 298, and asparagine 300. Mn(2+)-binding residues include glutamine 284, glutamate 298, and asparagine 300. Residues 402–546 (IGVYHNEMSE…YSTYEWENES (145 aa)) form an oligomerization domain region. A carbamoyl phosphate synthetic domain region spans residues 547–929 (IKSDKESVIV…ALYKAFEASY (383 aa)). Residues 671 to 861 (EQALKDLDIP…MAQVATNLIL (191 aa)) form the ATP-grasp 2 domain. Positions 707, 746, 748, 752, 777, 778, 779, 780, 820, and 832 each coordinate ATP. Glutamine 820, glutamate 832, and asparagine 834 together coordinate Mg(2+). Residues glutamine 820, glutamate 832, and asparagine 834 each coordinate Mn(2+). In terms of domain architecture, MGS-like spans 930–1059 (LHLPTFGNVI…ESRSFTTEAI (130 aa)). Residues 930 to 1059 (LHLPTFGNVI…ESRSFTTEAI (130 aa)) form an allosteric domain region.

This sequence belongs to the CarB family. As to quaternary structure, composed of two chains; the small (or glutamine) chain promotes the hydrolysis of glutamine to ammonia, which is used by the large (or ammonia) chain to synthesize carbamoyl phosphate. Tetramer of heterodimers (alpha,beta)4. The cofactor is Mg(2+). It depends on Mn(2+) as a cofactor.

The catalysed reaction is hydrogencarbonate + L-glutamine + 2 ATP + H2O = carbamoyl phosphate + L-glutamate + 2 ADP + phosphate + 2 H(+). It carries out the reaction hydrogencarbonate + NH4(+) + 2 ATP = carbamoyl phosphate + 2 ADP + phosphate + 2 H(+). It participates in amino-acid biosynthesis; L-arginine biosynthesis; carbamoyl phosphate from bicarbonate: step 1/1. The protein operates within pyrimidine metabolism; UMP biosynthesis via de novo pathway; (S)-dihydroorotate from bicarbonate: step 1/3. In terms of biological role, large subunit of the glutamine-dependent carbamoyl phosphate synthetase (CPSase). CPSase catalyzes the formation of carbamoyl phosphate from the ammonia moiety of glutamine, carbonate, and phosphate donated by ATP, constituting the first step of 2 biosynthetic pathways, one leading to arginine and/or urea and the other to pyrimidine nucleotides. The large subunit (synthetase) binds the substrates ammonia (free or transferred from glutamine from the small subunit), hydrogencarbonate and ATP and carries out an ATP-coupled ligase reaction, activating hydrogencarbonate by forming carboxy phosphate which reacts with ammonia to form carbamoyl phosphate. The chain is Carbamoyl phosphate synthase large chain from Streptococcus thermophilus (strain ATCC BAA-250 / LMG 18311).